Consider the following 327-residue polypeptide: Auxin-responsive protein IAA18 (327 aa).

Disordered regions lie at residues 26 to 45 (VKEA…DEDK), 52 to 98 (GLPG…IGTT), and 180 to 202 (NLTN…DDKA). The short motif at 49-53 (LKLGL) is the EAR-like (transcriptional repression) element. The segment covering 58–69 (QEERAADSREKI) has biased composition (basic and acidic residues). Residues 70 to 82 (QQQQRESSSEPSI) show a composition bias toward low complexity. Residues 180-189 (NLTNGSSFKQ) are compositionally biased toward polar residues. Over residues 190-202 (SPERQNDEADDKA) the composition is skewed to basic and acidic residues. The region spanning 209–313 (RPLVKINMDG…TVKRLRVMRR (105 aa)) is the PB1 domain.

This sequence belongs to the Aux/IAA family. In terms of assembly, homodimers and heterodimers. As to expression, highly expressed in flowers. Expressed in roots and etiolated seedlings.

Its subcellular location is the nucleus. Its function is as follows. Aux/IAA proteins are short-lived transcriptional factors that function as repressors of early auxin response genes at low auxin concentrations. The chain is Auxin-responsive protein IAA18 (IAA18) from Oryza sativa subsp. japonica (Rice).